The sequence spans 237 residues: Phosphoribosylaminoimidazole-succinocarboxamide synthase (237 aa).

The protein belongs to the SAICAR synthetase family.

The enzyme catalyses 5-amino-1-(5-phospho-D-ribosyl)imidazole-4-carboxylate + L-aspartate + ATP = (2S)-2-[5-amino-1-(5-phospho-beta-D-ribosyl)imidazole-4-carboxamido]succinate + ADP + phosphate + 2 H(+). It participates in purine metabolism; IMP biosynthesis via de novo pathway; 5-amino-1-(5-phospho-D-ribosyl)imidazole-4-carboxamide from 5-amino-1-(5-phospho-D-ribosyl)imidazole-4-carboxylate: step 1/2. This Fusobacterium nucleatum subsp. nucleatum (strain ATCC 25586 / DSM 15643 / BCRC 10681 / CIP 101130 / JCM 8532 / KCTC 2640 / LMG 13131 / VPI 4355) protein is Phosphoribosylaminoimidazole-succinocarboxamide synthase.